A 499-amino-acid chain; its full sequence is Aspartyl/glutamyl-tRNA(Asn/Gln) amidotransferase subunit B (499 aa).

It belongs to the GatB/GatE family. GatB subfamily. Heterotrimer of A, B and C subunits.

The catalysed reaction is L-glutamyl-tRNA(Gln) + L-glutamine + ATP + H2O = L-glutaminyl-tRNA(Gln) + L-glutamate + ADP + phosphate + H(+). It catalyses the reaction L-aspartyl-tRNA(Asn) + L-glutamine + ATP + H2O = L-asparaginyl-tRNA(Asn) + L-glutamate + ADP + phosphate + 2 H(+). Functionally, allows the formation of correctly charged Asn-tRNA(Asn) or Gln-tRNA(Gln) through the transamidation of misacylated Asp-tRNA(Asn) or Glu-tRNA(Gln) in organisms which lack either or both of asparaginyl-tRNA or glutaminyl-tRNA synthetases. The reaction takes place in the presence of glutamine and ATP through an activated phospho-Asp-tRNA(Asn) or phospho-Glu-tRNA(Gln). In Salinispora arenicola (strain CNS-205), this protein is Aspartyl/glutamyl-tRNA(Asn/Gln) amidotransferase subunit B.